A 166-amino-acid chain; its full sequence is PTS system glucose-specific EIIA component (166 aa).

Positions 34–138 constitute a PTS EIIA type-1 domain; the sequence is DPVFAQKMMG…SVISPIIITN (105 aa). Zn(2+)-binding residues include histidine 71 and histidine 86. The active-site Tele-phosphohistidine intermediate; for EIIA activity is histidine 86. Histidine 86 carries the phosphohistidine; by HPr modification.

In terms of assembly, heterodimer with glycerol kinase (glpk). It depends on Zn(2+) as a cofactor.

The protein resides in the cytoplasm. In terms of biological role, the phosphoenolpyruvate-dependent sugar phosphotransferase system (sugar PTS), a major carbohydrate active transport system, catalyzes the phosphorylation of incoming sugar substrates concomitantly with their translocation across the cell membrane. The enzyme II complex composed of PtsG and Crr is involved in glucose transport. This chain is PTS system glucose-specific EIIA component (crr), found in Staphylococcus aureus (strain Mu50 / ATCC 700699).